The primary structure comprises 67 residues: Small ribosomal subunit protein eS17 (67 aa).

It belongs to the eukaryotic ribosomal protein eS17 family. In terms of assembly, part of the 30S ribosomal subunit.

This chain is Small ribosomal subunit protein eS17, found in Thermococcus kodakarensis (strain ATCC BAA-918 / JCM 12380 / KOD1) (Pyrococcus kodakaraensis (strain KOD1)).